We begin with the raw amino-acid sequence, 258 residues long: DNA repair protein RecO (258 aa).

Belongs to the RecO family.

In terms of biological role, involved in DNA repair and RecF pathway recombination. The polypeptide is DNA repair protein RecO (Syntrophotalea carbinolica (strain DSM 2380 / NBRC 103641 / GraBd1) (Pelobacter carbinolicus)).